Consider the following 606-residue polypeptide: Mitogen-activated protein kinase 20 (606 aa).

One can recognise a Protein kinase domain in the interval 25–316 (FKVQEVIGKG…AEEALADPYF (292 aa)). ATP is bound by residues 31–39 (IGKGSYGVV) and lysine 54. Aspartate 151 acts as the Proton acceptor in catalysis. At threonine 187 the chain carries Phosphothreonine. The TXY motif lies at 187 to 189 (TDY). Tyrosine 189 is subject to Phosphotyrosine. Residue threonine 192 is modified to Phosphothreonine.

The protein belongs to the protein kinase superfamily. CMGC Ser/Thr protein kinase family. MAP kinase subfamily. Post-translationally, dually phosphorylated on Thr-187 and Tyr-189, which activates the enzyme.

It carries out the reaction L-seryl-[protein] + ATP = O-phospho-L-seryl-[protein] + ADP + H(+). The enzyme catalyses L-threonyl-[protein] + ATP = O-phospho-L-threonyl-[protein] + ADP + H(+). With respect to regulation, activated by threonine and tyrosine phosphorylation. The polypeptide is Mitogen-activated protein kinase 20 (MPK20) (Arabidopsis thaliana (Mouse-ear cress)).